A 419-amino-acid chain; its full sequence is Serine hydroxymethyltransferase (419 aa).

(6S)-5,6,7,8-tetrahydrofolate contacts are provided by residues Leu121 and 125–127 (GHL). Lys229 bears the N6-(pyridoxal phosphate)lysine mark. 354 to 356 (SPF) contacts (6S)-5,6,7,8-tetrahydrofolate.

It belongs to the SHMT family. In terms of assembly, homodimer. Pyridoxal 5'-phosphate serves as cofactor.

The protein resides in the cytoplasm. It carries out the reaction (6R)-5,10-methylene-5,6,7,8-tetrahydrofolate + glycine + H2O = (6S)-5,6,7,8-tetrahydrofolate + L-serine. It participates in one-carbon metabolism; tetrahydrofolate interconversion. It functions in the pathway amino-acid biosynthesis; glycine biosynthesis; glycine from L-serine: step 1/1. Its function is as follows. Catalyzes the reversible interconversion of serine and glycine with tetrahydrofolate (THF) serving as the one-carbon carrier. This reaction serves as the major source of one-carbon groups required for the biosynthesis of purines, thymidylate, methionine, and other important biomolecules. Also exhibits THF-independent aldolase activity toward beta-hydroxyamino acids, producing glycine and aldehydes, via a retro-aldol mechanism. This chain is Serine hydroxymethyltransferase, found in Coxiella burnetii (strain CbuG_Q212) (Coxiella burnetii (strain Q212)).